Consider the following 88-residue polypeptide: MGSLSIWHWLIVLAVVLVLFVGGGKISTLMGDVARGVKSFKKNMADDETMEGSTGSGGHIAPPGPAAGTVQRDASFSGTGRPSGSSTP.

Residues 4–24 form a helical membrane-spanning segment; that stretch reads LSIWHWLIVLAVVLVLFVGGG. Residues 45–88 are disordered; the sequence is ADDETMEGSTGSGGHIAPPGPAAGTVQRDASFSGTGRPSGSSTP. Over residues 75–88 the composition is skewed to low complexity; it reads SFSGTGRPSGSSTP.

Belongs to the TatA/E family. In terms of assembly, the Tat system comprises two distinct complexes: a TatABC complex, containing multiple copies of TatA, TatB and TatC subunits, and a separate TatA complex, containing only TatA subunits. Substrates initially bind to the TatABC complex, which probably triggers association of the separate TatA complex to form the active translocon.

It is found in the cell inner membrane. In terms of biological role, part of the twin-arginine translocation (Tat) system that transports large folded proteins containing a characteristic twin-arginine motif in their signal peptide across membranes. TatA could form the protein-conducting channel of the Tat system. The polypeptide is Sec-independent protein translocase protein TatA (Gluconacetobacter diazotrophicus (strain ATCC 49037 / DSM 5601 / CCUG 37298 / CIP 103539 / LMG 7603 / PAl5)).